Here is a 130-residue protein sequence, read N- to C-terminus: Fumarate reductase subunit D (130 aa).

The next 3 helical transmembrane spans lie at 35–55, 67–87, and 110–130; these read FAMITPITVLVLGILAPLGVI, SFATSIIGALFIIGTLALPMW, and IACYGFATIISALAVVFIFMI.

This sequence belongs to the FrdD family. Part of an enzyme complex containing four subunits: a flavoprotein (FrdA), an iron-sulfur protein (FrdB), and two hydrophobic anchor proteins (FrdC and FrdD).

The protein resides in the cell inner membrane. Functionally, anchors the catalytic components of the fumarate reductase complex to the cell membrane, binds quinones. The polypeptide is Fumarate reductase subunit D (Vibrio cholerae serotype O1 (strain M66-2)).